Reading from the N-terminus, the 858-residue chain is Elongation factor 2b (858 aa).

Positions 17–362 (SNIRNMSVIA…MITIHLPSPV (346 aa)) constitute a tr-type G domain. Residues 26-33 (AHVDHGKS), 158-161 (NKMD), and 216-218 (SGL) contribute to the GTP site. Residue His-715 is modified to Diphthamide.

Belongs to the TRAFAC class translation factor GTPase superfamily. Classic translation factor GTPase family. EF-G/EF-2 subfamily. In terms of assembly, binds to 80S ribosomes. Actively translating ribosomes show mutually exclusive binding of eIF5a (EIF5A or EIF5A2) and EEF2/eEF2. Interacts with serbp1; interaction sequesters eef2/eEF2 at the A-site of the ribosome, thereby blocking the interaction sites of the mRNA-tRNA complex, promoting ribosome stabilization and hibernation. Interacts with habp4; interaction takes place at the A-site of hibernating ribosomes and promotes ribosome stabilization.

It localises to the cytoplasm. It is found in the nucleus. The enzyme catalyses GTP + H2O = GDP + phosphate + H(+). In terms of biological role, catalyzes the GTP-dependent ribosomal translocation step during translation elongation. During this step, the ribosome changes from the pre-translocational (PRE) to the post-translocational (POST) state as the newly formed A-site-bound peptidyl-tRNA and P-site-bound deacylated tRNA move to the P and E sites, respectively. Catalyzes the coordinated movement of the two tRNA molecules, the mRNA and conformational changes in the ribosome. This Danio rerio (Zebrafish) protein is Elongation factor 2b.